Here is a 200-residue protein sequence, read N- to C-terminus: MRRGRLLIAGLAALVLSACATLPEPVDDPKARYQEAVERLRAQTDWDASGRAALRTADDAGSLSLEWRQRGETYQVDLRAPLGAGSARLEGGPEGVWLTTSAGDREYAPDPETLVAWFTGYQVPVSALRYWLRGLDAPGPEVERLDLDPAGRPERLHQAGWEVVYRDWSQTNGLPLPRRLDISRGEDSVRVVIRDWSLAP.

The signal sequence occupies residues 1-18 (MRRGRLLIAGLAALVLSA). Residue Cys-19 is the site of N-palmitoyl cysteine attachment. Cys-19 carries the S-diacylglycerol cysteine lipid modification.

It belongs to the LolB family. As to quaternary structure, monomer.

The protein resides in the cell outer membrane. Functionally, plays a critical role in the incorporation of lipoproteins in the outer membrane after they are released by the LolA protein. This is Outer-membrane lipoprotein LolB from Alkalilimnicola ehrlichii (strain ATCC BAA-1101 / DSM 17681 / MLHE-1).